The following is a 299-amino-acid chain: Small ribosomal subunit protein uS2 (299 aa).

Positions 227 to 299 (SERKSEKSTK…DKAKASNEEE (73 aa)) are disordered.

It belongs to the universal ribosomal protein uS2 family.

This is Small ribosomal subunit protein uS2 from Christiangramia forsetii (strain DSM 17595 / CGMCC 1.15422 / KT0803) (Gramella forsetii).